The chain runs to 107 residues: Large ribosomal subunit protein uL24 (107 aa).

This sequence belongs to the universal ribosomal protein uL24 family. In terms of assembly, part of the 50S ribosomal subunit.

Its function is as follows. One of two assembly initiator proteins, it binds directly to the 5'-end of the 23S rRNA, where it nucleates assembly of the 50S subunit. In terms of biological role, one of the proteins that surrounds the polypeptide exit tunnel on the outside of the subunit. The protein is Large ribosomal subunit protein uL24 of Nitratidesulfovibrio vulgaris (strain DSM 19637 / Miyazaki F) (Desulfovibrio vulgaris).